A 388-amino-acid polypeptide reads, in one-letter code: NADH-quinone oxidoreductase subunit D 2 (388 aa).

It belongs to the complex I 49 kDa subunit family. As to quaternary structure, NDH-1 is composed of 14 different subunits. Subunits NuoB, C, D, E, F, and G constitute the peripheral sector of the complex.

The protein localises to the cell inner membrane. The enzyme catalyses a quinone + NADH + 5 H(+)(in) = a quinol + NAD(+) + 4 H(+)(out). NDH-1 shuttles electrons from NADH, via FMN and iron-sulfur (Fe-S) centers, to quinones in the respiratory chain. The immediate electron acceptor for the enzyme in this species is believed to be ubiquinone. Couples the redox reaction to proton translocation (for every two electrons transferred, four hydrogen ions are translocated across the cytoplasmic membrane), and thus conserves the redox energy in a proton gradient. The polypeptide is NADH-quinone oxidoreductase subunit D 2 (Sorangium cellulosum (strain So ce56) (Polyangium cellulosum (strain So ce56))).